A 578-amino-acid chain; its full sequence is Cyclin-SDS (578 aa).

Positions 1 to 31 (MKEIAMRNSKRKPEPTPFAGKKLRSTRLRRK) are disordered. Residues 21–31 (KKLRSTRLRRK) show a composition bias toward basic residues.

It belongs to the cyclin family. In terms of assembly, may interact with CDKA-1 and CDKB1-1.

Its function is as follows. Meiosis-specific cyclin. Required for normal homolog synapsis and recombination in early to mid-prophase 1. May regulate the timing of sister chromatid separation. The sequence is that of Cyclin-SDS (SDS) from Arabidopsis thaliana (Mouse-ear cress).